The chain runs to 321 residues: Transaldolase (321 aa).

The Schiff-base intermediate with substrate role is filled by Lys132.

Belongs to the transaldolase family. Type 1 subfamily. As to quaternary structure, homodimer.

It localises to the cytoplasm. The enzyme catalyses D-sedoheptulose 7-phosphate + D-glyceraldehyde 3-phosphate = D-erythrose 4-phosphate + beta-D-fructose 6-phosphate. The protein operates within carbohydrate degradation; pentose phosphate pathway; D-glyceraldehyde 3-phosphate and beta-D-fructose 6-phosphate from D-ribose 5-phosphate and D-xylulose 5-phosphate (non-oxidative stage): step 2/3. In terms of biological role, transaldolase is important for the balance of metabolites in the pentose-phosphate pathway. This chain is Transaldolase, found in Rhizobium etli (strain ATCC 51251 / DSM 11541 / JCM 21823 / NBRC 15573 / CFN 42).